A 196-amino-acid chain; its full sequence is MHMEEHTLNQMSDELKLMLGRFRHEQFVEKLGWRLPAHPSQAGCEWDQYDTEHARYLLAFNEDRAIVGCARLIPTTFPNLLEGVFGHTCAGAPPKHPAIWEMTRFTTREPQLAMPLFWRSLKTASLAGADAIVGIVNSTMERYYKINGVHYERLGPVTVHQNEKILAIKLSAHREHHRSAVAPSAFMSDTLLRETA.

The protein belongs to the autoinducer synthase family.

The catalysed reaction is a fatty acyl-[ACP] + S-adenosyl-L-methionine = an N-acyl-L-homoserine lactone + S-methyl-5'-thioadenosine + holo-[ACP] + H(+). In terms of biological role, required for the synthesis of a yet unknown N-aceyl-homoserine lactone (N-aceyl-HSL), an autoinducer molecule which binds to PhzR and thus regulates phenazine production. The polypeptide is Acyl-homoserine-lactone synthase (phzI) (Pseudomonas chlororaphis (Pseudomonas aureofaciens)).